The primary structure comprises 290 residues: Energy-coupling factor transporter ATP-binding protein EcfA2 (290 aa).

An ABC transporter domain is found at 6-246 (EKVEHVYNAR…ADKLAAIGLS (241 aa)). 40-47 (GHTGSGKS) is a binding site for ATP.

It belongs to the ABC transporter superfamily. Energy-coupling factor EcfA family. Forms a stable energy-coupling factor (ECF) transporter complex composed of 2 membrane-embedded substrate-binding proteins (S component), 2 ATP-binding proteins (A component) and 2 transmembrane proteins (T component).

Its subcellular location is the cell membrane. Its function is as follows. ATP-binding (A) component of a common energy-coupling factor (ECF) ABC-transporter complex. Unlike classic ABC transporters this ECF transporter provides the energy necessary to transport a number of different substrates. This Geobacillus kaustophilus (strain HTA426) protein is Energy-coupling factor transporter ATP-binding protein EcfA2.